The following is a 447-amino-acid chain: BAG family molecular chaperone regulator 5 (447 aa).

BAG domains follow at residues 9–86 (SISR…EQNA), 95–167 (QNIF…EDCM), 182–260 (SVAK…DLEE), 275–350 (SILK…DLKE), and 365–442 (SHKA…DLKS).

As to quaternary structure, binds to the ATPase domain of HSP/HSP70 chaperones. Binds PRKN. Interacts with HSPA8 and JPH2. In terms of tissue distribution, expressed in the heart.

In terms of biological role, co-chaperone for HSP/HSP70 proteins. It functions as a nucleotide-exchange factor promoting the release of ADP from HSP70, thereby activating HSP70-mediated protein refolding. Has an essential role in maintaining proteostasis at junctional membrane complexes (JMC), where it may function as a scaffold between the HSPA8 chaperone and JMC proteins enabling correct, HSPA8-dependent JMC protein folding. Inhibits both auto-ubiquitination of PRKN and ubiquitination of target proteins by PRKN. This is BAG family molecular chaperone regulator 5 (BAG5) from Homo sapiens (Human).